Reading from the N-terminus, the 267-residue chain is B3 domain-containing protein Os02g0455800 (267 aa).

A DNA-binding region (TF-B3) is located at residues 30 to 131; the sequence is EKFLMPSDLC…RLFICCRLGT (102 aa). Positions 172–221 are disordered; that stretch reads QARLHDGNQDGGGAPSRHVPSSGRRVEAQLSRVSSRRQRRTMKHSIPEPT. The segment covering 205-214 has biased composition (basic residues); that stretch reads SSRRQRRTMK.

The protein resides in the nucleus. The chain is B3 domain-containing protein Os02g0455800 from Oryza sativa subsp. japonica (Rice).